We begin with the raw amino-acid sequence, 300 residues long: MPLSMNREVFITCAVTGAGDTVSKSSHVPVTPKQIAESAIEAAKAGAAVVHCHVRDPETGAPARRLDLYREVTDRIRSADIDVVLNLTAGMGGDLVFGNVESPFPVDEKGTDMAGATERVAHVAECLPEICTLDCGTMNFSLGDYVMTNTPSMLREMARQMTALGVRPEIEAFDTGHLWFAKQLAEEGLIEDPVLIQLCMGIPWGAPDDLNTFMAMVNNVPSNWTFSAFSIGRNAMAYPAAAVLAGGNVRVGLEDNLYVGKGQLATNAQLVEKAVSVVESMGAKIIGPEEVRRKLKLTKR.

Zn(2+) contacts are provided by H51, H53, and E254.

It belongs to the BKACE family. In terms of assembly, homotetramer. Zn(2+) serves as cofactor.

It carries out the reaction 3-dehydrocarnitine + acetyl-CoA = N,N,N-trimethylglycyl-CoA + acetoacetate. It functions in the pathway amine and polyamine metabolism; carnitine metabolism. Catalyzes the condensation of dehydrocarnitine and acetyl-CoA, forming acetoacetate and betainyl-CoA (N,N,N-trimethylglycyl-CoA). Is involved in a L-carnitine degradation pathway that allows R.meliloti to grow on L-carnitine as the sole source of carbon and nitrogen. The chain is 3-dehydrocarnitine:acetyl-CoA trimethylamine transferase from Rhizobium meliloti (strain 1021) (Ensifer meliloti).